A 218-amino-acid polypeptide reads, in one-letter code: GCN5-related N-acetyltransferase 9 (218 aa).

Residues S36 to T183 enclose the N-acetyltransferase domain. Acetyl-CoA-binding positions include M112–A114, G120–K125, N152–A154, and F159.

This sequence belongs to the acetyltransferase family. GNAT subfamily. As to quaternary structure, oligomer. In terms of tissue distribution, expressed throughout the plant.

It localises to the cytoplasm. The protein resides in the nucleus. The enzyme catalyses an N-terminal L-alpha-aminoacyl-[protein] + acetyl-CoA = N-terminal N(alpha)-acetyl-L-alpha-aminoacyl-[protein] + CoA + H(+). It carries out the reaction L-lysyl-[protein] + acetyl-CoA = N(6)-acetyl-L-lysyl-[protein] + CoA + H(+). Functionally, probable protein acetyltransferase with dual specificity triggering both N-alpha-acetylation (NTA) and epsilon-lysine acetylation (KA). This chain is GCN5-related N-acetyltransferase 9, found in Arabidopsis thaliana (Mouse-ear cress).